Consider the following 525-residue polypeptide: Peptide chain release factor 3 (525 aa).

The region spanning 9–276 is the tr-type G domain; the sequence is AKRRTFAIIS…GFTRYAPAPQ (268 aa). Residues 18–25, 86–90, and 140–143 contribute to the GTP site; these read SHPDAGKT, DTPGH, and NKFD.

This sequence belongs to the TRAFAC class translation factor GTPase superfamily. Classic translation factor GTPase family. PrfC subfamily.

It is found in the cytoplasm. Its function is as follows. Increases the formation of ribosomal termination complexes and stimulates activities of RF-1 and RF-2. It binds guanine nucleotides and has strong preference for UGA stop codons. It may interact directly with the ribosome. The stimulation of RF-1 and RF-2 is significantly reduced by GTP and GDP, but not by GMP. This Francisella tularensis subsp. tularensis (strain FSC 198) protein is Peptide chain release factor 3.